Reading from the N-terminus, the 102-residue chain is Large ribosomal subunit protein uL24 (102 aa).

Belongs to the universal ribosomal protein uL24 family. Part of the 50S ribosomal subunit.

Functionally, one of two assembly initiator proteins, it binds directly to the 5'-end of the 23S rRNA, where it nucleates assembly of the 50S subunit. One of the proteins that surrounds the polypeptide exit tunnel on the outside of the subunit. This Cupriavidus metallidurans (strain ATCC 43123 / DSM 2839 / NBRC 102507 / CH34) (Ralstonia metallidurans) protein is Large ribosomal subunit protein uL24.